A 189-amino-acid polypeptide reads, in one-letter code: Inosine triphosphate pyrophosphatase (189 aa).

14–19 (TGNQNK) is a binding site for ITP. Glutamate 42 contacts Mg(2+). ITP is bound by residues lysine 54, 70 to 71 (DT), lysine 87, 146 to 149 (FGWD), lysine 167, and 172 to 173 (HR).

The protein belongs to the HAM1 NTPase family. In terms of assembly, homodimer. Mg(2+) is required as a cofactor. Requires Mn(2+) as cofactor.

The protein resides in the cytoplasm. It localises to the nucleus. It carries out the reaction ITP + H2O = IMP + diphosphate + H(+). The catalysed reaction is dITP + H2O = dIMP + diphosphate + H(+). The enzyme catalyses XTP + H2O = XMP + diphosphate + H(+). In terms of biological role, pyrophosphatase that hydrolyzes non-canonical purine nucleotides such as inosine triphosphate (ITP), deoxyinosine triphosphate (dITP) or xanthosine 5'-triphosphate (XTP) to their respective monophosphate derivatives. The enzyme does not distinguish between the deoxy- and ribose forms. Probably excludes non-canonical purines from RNA and DNA precursor pools, thus preventing their incorporation into RNA and DNA and avoiding chromosomal lesions. This Pyricularia oryzae (strain 70-15 / ATCC MYA-4617 / FGSC 8958) (Rice blast fungus) protein is Inosine triphosphate pyrophosphatase.